Here is a 118-residue protein sequence, read N- to C-terminus: Group 1 truncated hemoglobin GlbN (118 aa).

His-70 contributes to the heme binding site.

Belongs to the truncated hemoglobin family. Group I subfamily. In terms of assembly, monomer. Requires heme as cofactor.

It localises to the membrane. The sequence is that of Group 1 truncated hemoglobin GlbN (glbN) from Nostoc commune.